The sequence spans 308 residues: D-alanine--D-alanine ligase (308 aa).

The ATP-grasp domain maps to lysine 105–aspartate 302. Aspartate 133 to aspartate 188 serves as a coordination point for ATP. Mg(2+) contacts are provided by aspartate 256, glutamate 269, and asparagine 271.

The protein belongs to the D-alanine--D-alanine ligase family. Mg(2+) serves as cofactor. Mn(2+) is required as a cofactor.

The protein resides in the cytoplasm. The catalysed reaction is 2 D-alanine + ATP = D-alanyl-D-alanine + ADP + phosphate + H(+). It participates in cell wall biogenesis; peptidoglycan biosynthesis. In terms of biological role, cell wall formation. The polypeptide is D-alanine--D-alanine ligase (Anaeromyxobacter sp. (strain K)).